The chain runs to 182 residues: Protein GrpE (182 aa).

Positions 1-17 are enriched in basic and acidic residues; it reads MEEKKRCEESEKIKEQE. The disordered stretch occupies residues 1-33; it reads MEEKKRCEESEKIKEQENETLPNEDSPSMGKKV.

It belongs to the GrpE family. Homodimer.

Its subcellular location is the cytoplasm. Participates actively in the response to hyperosmotic and heat shock by preventing the aggregation of stress-denatured proteins, in association with DnaK and GrpE. It is the nucleotide exchange factor for DnaK and may function as a thermosensor. Unfolded proteins bind initially to DnaJ; upon interaction with the DnaJ-bound protein, DnaK hydrolyzes its bound ATP, resulting in the formation of a stable complex. GrpE releases ADP from DnaK; ATP binding to DnaK triggers the release of the substrate protein, thus completing the reaction cycle. Several rounds of ATP-dependent interactions between DnaJ, DnaK and GrpE are required for fully efficient folding. This Borrelia hermsii (strain HS1 / DAH) protein is Protein GrpE.